The following is a 153-amino-acid chain: NADPH-dependent 7-cyano-7-deazaguanine reductase (153 aa).

The interval Met1–Pro22 is disordered. Cys51 acts as the Thioimide intermediate in catalysis. Residue Asp58 is the Proton donor of the active site. Substrate is bound by residues Val73 to Ser75 and His92 to Glu93.

Belongs to the GTP cyclohydrolase I family. QueF type 1 subfamily.

The protein resides in the cytoplasm. The catalysed reaction is 7-aminomethyl-7-carbaguanine + 2 NADP(+) = 7-cyano-7-deazaguanine + 2 NADPH + 3 H(+). Its pathway is tRNA modification; tRNA-queuosine biosynthesis. Its function is as follows. Catalyzes the NADPH-dependent reduction of 7-cyano-7-deazaguanine (preQ0) to 7-aminomethyl-7-deazaguanine (preQ1). The chain is NADPH-dependent 7-cyano-7-deazaguanine reductase from Maricaulis maris (strain MCS10) (Caulobacter maris).